Reading from the N-terminus, the 786-residue chain is Endonuclease MutS2 (786 aa).

332 to 339 (GPNTGGKT) contributes to the ATP binding site. The Smr domain maps to 711 to 786 (IDLRGMDSEE…GTGVTVVILK (76 aa)).

The protein belongs to the DNA mismatch repair MutS family. MutS2 subfamily. Homodimer. Binds to stalled ribosomes, contacting rRNA.

Its function is as follows. Endonuclease that is involved in the suppression of homologous recombination and thus may have a key role in the control of bacterial genetic diversity. Acts as a ribosome collision sensor, splitting the ribosome into its 2 subunits. Detects stalled/collided 70S ribosomes which it binds and splits by an ATP-hydrolysis driven conformational change. Acts upstream of the ribosome quality control system (RQC), a ribosome-associated complex that mediates the extraction of incompletely synthesized nascent chains from stalled ribosomes and their subsequent degradation. Probably generates substrates for RQC. The polypeptide is Endonuclease MutS2 (Clostridium perfringens (strain SM101 / Type A)).